The following is a 543-amino-acid chain: Probable protein kinase UbiB (543 aa).

Residues 123-501 (DFDSQALASA…GSRQGRARYL (379 aa)) enclose the Protein kinase domain. ATP-binding positions include 129-137 (LASASIAQV) and K152. The active-site Proton acceptor is the D287. The helical transmembrane segment at 517–537 (MVNIALWPIGLYVAGGVIWLA) threads the bilayer.

Belongs to the ABC1 family. UbiB subfamily.

It localises to the cell inner membrane. Its pathway is cofactor biosynthesis; ubiquinone biosynthesis [regulation]. In terms of biological role, is probably a protein kinase regulator of UbiI activity which is involved in aerobic coenzyme Q (ubiquinone) biosynthesis. The sequence is that of Probable protein kinase UbiB from Edwardsiella ictaluri (strain 93-146).